We begin with the raw amino-acid sequence, 359 residues long: Tropomodulin-1 (359 aa).

Residues 36–61 form a disordered region; it reads ELDPDNALLPAGLRQKDQTTKAPTGP. The interval 39–138 is tropomyosin-binding; that stretch reads PDNALLPAGL…CDIAAILGMH (100 aa).

The protein belongs to the tropomodulin family. Binds to the N-terminus of tropomyosin and to actin. Interacts with FLII.

It is found in the cytoplasm. The protein resides in the cytoskeleton. Its function is as follows. Blocks the elongation and depolymerization of the actin filaments at the pointed end. The Tmod/TM complex contributes to the formation of the short actin protofilament, which in turn defines the geometry of the membrane skeleton. The polypeptide is Tropomodulin-1 (Tmod1) (Rattus norvegicus (Rat)).